Consider the following 372-residue polypeptide: F-box/kelch-repeat protein At5g48990 (372 aa).

The F-box domain occupies 14–60 (SSPNPSLPEDLIVSILARVSRSYYTNLSVVSKTFRSILTSPELYKTR). The stretch at 176 to 222 (RTYFPGSSEKPDSLNCVEVYNTNTQTWNPVPPQKRKLKFGNMEGKIY) is one Kelch repeat.

The sequence is that of F-box/kelch-repeat protein At5g48990 from Arabidopsis thaliana (Mouse-ear cress).